The sequence spans 208 residues: Small ribosomal subunit protein uS4 (208 aa).

The S4 RNA-binding domain maps to 98–158; the sequence is RRLDNVVYRL…EKNRKISVVA (61 aa).

This sequence belongs to the universal ribosomal protein uS4 family. In terms of assembly, part of the 30S ribosomal subunit. Contacts protein S5. The interaction surface between S4 and S5 is involved in control of translational fidelity.

One of the primary rRNA binding proteins, it binds directly to 16S rRNA where it nucleates assembly of the body of the 30S subunit. Functionally, with S5 and S12 plays an important role in translational accuracy. The polypeptide is Small ribosomal subunit protein uS4 (Lawsonia intracellularis (strain PHE/MN1-00)).